The sequence spans 500 residues: Lycopene beta cyclase, chloroplastic (500 aa).

The transit peptide at 1 to 81 (MDTLLKTPNK…ELPMYDPSKG (81 aa)) directs the protein to the chloroplast. 86–114 (LAVVGGGPAGLAVAQQVSEAGLSVVSIDP) is an NAD(+) binding site.

Belongs to the lycopene cyclase family.

Its subcellular location is the plastid. The protein resides in the chloroplast. It carries out the reaction a carotenoid psi-end group = a carotenoid beta-end derivative. The protein operates within carotenoid biosynthesis; beta-carotene biosynthesis. It functions in the pathway carotenoid biosynthesis; beta-zeacarotene biosynthesis. In terms of biological role, catalyzes the double cyclization reaction which converts lycopene to beta-carotene and neurosporene to beta-zeacarotene. This Nicotiana tabacum (Common tobacco) protein is Lycopene beta cyclase, chloroplastic (LCY1).